The chain runs to 232 residues: Small ribosomal subunit protein uS3 (232 aa).

The 69-residue stretch at 39 to 107 folds into the KH type-2 domain; sequence VRQFLTSELK…PAQINIAEVR (69 aa). The tract at residues 213–232 is disordered; sequence AANAVEPKGDKPKKQRKGRK.

Belongs to the universal ribosomal protein uS3 family. Part of the 30S ribosomal subunit. Forms a tight complex with proteins S10 and S14.

Functionally, binds the lower part of the 30S subunit head. Binds mRNA in the 70S ribosome, positioning it for translation. This is Small ribosomal subunit protein uS3 from Vibrio parahaemolyticus serotype O3:K6 (strain RIMD 2210633).